Here is a 256-residue protein sequence, read N- to C-terminus: Small ribosomal subunit protein eS1A (256 aa).

A2 is modified (N-acetylalanine; partial).

This sequence belongs to the eukaryotic ribosomal protein eS1 family. In terms of assembly, component of the small ribosomal subunit. Mature ribosomes consist of a small (40S) and a large (60S) subunit. The 40S subunit contains about 33 different proteins and 1 molecule of RNA (18S). The 60S subunit contains about 49 different proteins and 3 molecules of RNA (25S, 5.8S and 5S).

It localises to the cytoplasm. This is Small ribosomal subunit protein eS1A from Scheffersomyces stipitis (strain ATCC 58785 / CBS 6054 / NBRC 10063 / NRRL Y-11545) (Yeast).